The following is a 201-amino-acid chain: 3-isopropylmalate dehydratase small subunit (201 aa).

The protein belongs to the LeuD family. LeuD type 1 subfamily. In terms of assembly, heterodimer of LeuC and LeuD.

The enzyme catalyses (2R,3S)-3-isopropylmalate = (2S)-2-isopropylmalate. It participates in amino-acid biosynthesis; L-leucine biosynthesis; L-leucine from 3-methyl-2-oxobutanoate: step 2/4. Its function is as follows. Catalyzes the isomerization between 2-isopropylmalate and 3-isopropylmalate, via the formation of 2-isopropylmaleate. The polypeptide is 3-isopropylmalate dehydratase small subunit (Rhodopseudomonas palustris (strain ATCC BAA-98 / CGA009)).